The primary structure comprises 473 residues: Siroheme synthase (473 aa).

The tract at residues Met-1 to Leu-203 is precorrin-2 dehydrogenase /sirohydrochlorin ferrochelatase. Residues Asp-22 to Val-23 and Pro-43 to Lys-44 contribute to the NAD(+) site. Ser-128 is subject to Phosphoserine. A uroporphyrinogen-III C-methyltransferase region spans residues Gly-215 to Ala-473. S-adenosyl-L-methionine is bound at residue Pro-224. Asp-247 (proton acceptor) is an active-site residue. Catalysis depends on Lys-269, which acts as the Proton donor. Residues Gly-300 to Asp-302, Ile-305, Thr-330 to Ala-331, Met-382, and Gly-411 each bind S-adenosyl-L-methionine.

It in the N-terminal section; belongs to the precorrin-2 dehydrogenase / sirohydrochlorin ferrochelatase family. The protein in the C-terminal section; belongs to the precorrin methyltransferase family.

The enzyme catalyses uroporphyrinogen III + 2 S-adenosyl-L-methionine = precorrin-2 + 2 S-adenosyl-L-homocysteine + H(+). It catalyses the reaction precorrin-2 + NAD(+) = sirohydrochlorin + NADH + 2 H(+). The catalysed reaction is siroheme + 2 H(+) = sirohydrochlorin + Fe(2+). It functions in the pathway cofactor biosynthesis; adenosylcobalamin biosynthesis; precorrin-2 from uroporphyrinogen III: step 1/1. Its pathway is cofactor biosynthesis; adenosylcobalamin biosynthesis; sirohydrochlorin from precorrin-2: step 1/1. The protein operates within porphyrin-containing compound metabolism; siroheme biosynthesis; precorrin-2 from uroporphyrinogen III: step 1/1. It participates in porphyrin-containing compound metabolism; siroheme biosynthesis; siroheme from sirohydrochlorin: step 1/1. It functions in the pathway porphyrin-containing compound metabolism; siroheme biosynthesis; sirohydrochlorin from precorrin-2: step 1/1. In terms of biological role, multifunctional enzyme that catalyzes the SAM-dependent methylations of uroporphyrinogen III at position C-2 and C-7 to form precorrin-2 via precorrin-1. Then it catalyzes the NAD-dependent ring dehydrogenation of precorrin-2 to yield sirohydrochlorin. Finally, it catalyzes the ferrochelation of sirohydrochlorin to yield siroheme. This chain is Siroheme synthase, found in Pseudoalteromonas translucida (strain TAC 125).